The sequence spans 260 residues: Indole-3-glycerol phosphate synthase (260 aa).

This sequence belongs to the TrpC family.

The catalysed reaction is 1-(2-carboxyphenylamino)-1-deoxy-D-ribulose 5-phosphate + H(+) = (1S,2R)-1-C-(indol-3-yl)glycerol 3-phosphate + CO2 + H2O. It participates in amino-acid biosynthesis; L-tryptophan biosynthesis; L-tryptophan from chorismate: step 4/5. This is Indole-3-glycerol phosphate synthase from Staphylococcus aureus (strain COL).